We begin with the raw amino-acid sequence, 268 residues long: Undecaprenyl-diphosphatase (268 aa).

The next 7 membrane-spanning stretches (helical) occupy residues 47–67, 83–103, 109–129, 144–164, 184–204, 218–238, and 246–266; these read FAIL…FFKL, FIIG…IAGK, LFDP…LLWV, YPLM…IPGV, AAEF…VYDF, LIAI…KAFL, and FVLF…ALAL.

The protein belongs to the UppP family.

Its subcellular location is the cell inner membrane. It catalyses the reaction di-trans,octa-cis-undecaprenyl diphosphate + H2O = di-trans,octa-cis-undecaprenyl phosphate + phosphate + H(+). Its function is as follows. Catalyzes the dephosphorylation of undecaprenyl diphosphate (UPP). Confers resistance to bacitracin. The protein is Undecaprenyl-diphosphatase of Bradyrhizobium sp. (strain ORS 278).